The chain runs to 274 residues: Formamidopyrimidine-DNA glycosylase (274 aa).

P2 serves as the catalytic Schiff-base intermediate with DNA. E3 (proton donor) is an active-site residue. K58 functions as the Proton donor; for beta-elimination activity in the catalytic mechanism. DNA is bound by residues H91, R110, and K152. Residues 237–271 (KVYGRKNLPCLVCENKIETVVIAGRHSAFCPHCQP) form an FPG-type zinc finger. R261 acts as the Proton donor; for delta-elimination activity in catalysis.

This sequence belongs to the FPG family. Monomer. Zn(2+) is required as a cofactor.

The enzyme catalyses Hydrolysis of DNA containing ring-opened 7-methylguanine residues, releasing 2,6-diamino-4-hydroxy-5-(N-methyl)formamidopyrimidine.. The catalysed reaction is 2'-deoxyribonucleotide-(2'-deoxyribose 5'-phosphate)-2'-deoxyribonucleotide-DNA = a 3'-end 2'-deoxyribonucleotide-(2,3-dehydro-2,3-deoxyribose 5'-phosphate)-DNA + a 5'-end 5'-phospho-2'-deoxyribonucleoside-DNA + H(+). Its function is as follows. Involved in base excision repair of DNA damaged by oxidation or by mutagenic agents. Acts as a DNA glycosylase that recognizes and removes damaged bases. Has a preference for oxidized purines, such as 7,8-dihydro-8-oxoguanine (8-oxoG). Has AP (apurinic/apyrimidinic) lyase activity and introduces nicks in the DNA strand. Cleaves the DNA backbone by beta-delta elimination to generate a single-strand break at the site of the removed base with both 3'- and 5'-phosphates. This is Formamidopyrimidine-DNA glycosylase from Legionella pneumophila subsp. pneumophila (strain Philadelphia 1 / ATCC 33152 / DSM 7513).